The sequence spans 134 residues: Estradiol 17-beta-dehydrogenase 8 (134 aa).

Serine 38 lines the substrate pocket. Lysine 42 is modified (N6-succinyllysine). Tyrosine 51 acts as the Proton acceptor in catalysis. NAD(+)-binding positions include 51-55 and 84-86; these read YAASK and IAT. Lysine 55 carries the N6-succinyllysine modification.

The protein belongs to the short-chain dehydrogenases/reductases (SDR) family. Heterotetramer with CBR4; contains two molecules of HSD17B8 and CBR4.

The protein localises to the mitochondrion matrix. It catalyses the reaction 17beta-estradiol + NAD(+) = estrone + NADH + H(+). The enzyme catalyses 17beta-estradiol + NADP(+) = estrone + NADPH + H(+). It carries out the reaction testosterone + NAD(+) = androst-4-ene-3,17-dione + NADH + H(+). The protein operates within steroid biosynthesis; estrogen biosynthesis. Its pathway is lipid metabolism; fatty acid biosynthesis. Its function is as follows. NAD-dependent 17-beta-hydroxysteroid dehydrogenase with highest activity towards estradiol. Has very low activity towards testosterone. The heterotetramer with CBR4 has NADH-dependent 3-ketoacyl-acyl carrier protein reductase activity, and thereby plays a role in mitochondrial fatty acid biosynthesis. Within the heterotetramer, HSD17B8 binds NADH; CBR4 binds NADPD. In Callithrix jacchus (White-tufted-ear marmoset), this protein is Estradiol 17-beta-dehydrogenase 8 (HSD17B8).